A 657-amino-acid polypeptide reads, in one-letter code: Glycogen debranching enzyme (657 aa).

Asp-336 serves as the catalytic Nucleophile. Catalysis depends on Glu-371, which acts as the Proton donor. A disordered region spans residues 460–479 (ANGEENRDGTNNNYSNNHGK).

Belongs to the glycosyl hydrolase 13 family.

The enzyme catalyses Hydrolysis of (1-&gt;6)-alpha-D-glucosidic linkages to branches with degrees of polymerization of three or four glucose residues in limit dextrin.. It functions in the pathway glycan degradation; glycogen degradation. Functionally, removes maltotriose and maltotetraose chains that are attached by 1,6-alpha-linkage to the limit dextrin main chain, generating a debranched limit dextrin. In Escherichia coli O1:K1 / APEC, this protein is Glycogen debranching enzyme.